A 350-amino-acid polypeptide reads, in one-letter code: UDP-3-O-acylglucosamine N-acyltransferase (350 aa).

His244 serves as the catalytic Proton acceptor.

It belongs to the transferase hexapeptide repeat family. LpxD subfamily. Homotrimer.

It carries out the reaction a UDP-3-O-[(3R)-3-hydroxyacyl]-alpha-D-glucosamine + a (3R)-hydroxyacyl-[ACP] = a UDP-2-N,3-O-bis[(3R)-3-hydroxyacyl]-alpha-D-glucosamine + holo-[ACP] + H(+). It functions in the pathway bacterial outer membrane biogenesis; LPS lipid A biosynthesis. Catalyzes the N-acylation of UDP-3-O-acylglucosamine using 3-hydroxyacyl-ACP as the acyl donor. Is involved in the biosynthesis of lipid A, a phosphorylated glycolipid that anchors the lipopolysaccharide to the outer membrane of the cell. This Herminiimonas arsenicoxydans protein is UDP-3-O-acylglucosamine N-acyltransferase.